The chain runs to 477 residues: Methionine aminopeptidase 2 (477 aa).

Positions 1-121 are disordered; that stretch reads MAGVEEAASC…TDPPSVPICD (121 aa). Alanine 2 carries the post-translational modification N-acetylalanine. A compositionally biased stretch (basic residues) spans 36–46; that stretch reads KKKKRKKKKSK. At serine 45 the chain carries Phosphoserine. Positions 54 to 78 are enriched in basic and acidic residues; sequence EPDKEAGASVDEVTRQLERQALEEK. Serine 62 carries the post-translational modification Phosphoserine; alternate. O-linked (GlcNAc) serine; alternate glycosylation is present at serine 62. Residues 79–91 are compositionally biased toward acidic residues; that stretch reads EKDDDDEDGDGDG. The segment covering 96-108 has biased composition (basic residues); that stretch reads GKKKKKKKKKRGP. Histidine 230 is a binding site for substrate. A divalent metal cation-binding residues include aspartate 250, aspartate 261, and histidine 330. Residue histidine 338 participates in substrate binding. Residues glutamate 363 and glutamate 458 each contribute to the a divalent metal cation site.

Belongs to the peptidase M24A family. Methionine aminopeptidase eukaryotic type 2 subfamily. Binds EIF2S1 at low magnesium concentrations. Interacts strongly with the eIF-2 gamma-subunit EIF2S3. Co(2+) serves as cofactor. It depends on Zn(2+) as a cofactor. The cofactor is Mn(2+). Requires Fe(2+) as cofactor. Post-translationally, contains approximately 12 O-linked N-acetylglucosamine (GlcNAc) residues. O-glycosylation is required for EIF2S1 binding.

The protein localises to the cytoplasm. The catalysed reaction is Release of N-terminal amino acids, preferentially methionine, from peptides and arylamides.. Functionally, cotranslationally removes the N-terminal methionine from nascent proteins. The N-terminal methionine is often cleaved when the second residue in the primary sequence is small and uncharged (Met-Ala-, Cys, Gly, Pro, Ser, Thr, or Val). In terms of biological role, protects eukaryotic initiation factor EIF2S1 from translation-inhibiting phosphorylation by inhibitory kinases such as EIF2AK2/PKR and EIF2AK1/HCR. Plays a critical role in the regulation of protein synthesis. This is Methionine aminopeptidase 2 from Bos taurus (Bovine).